The chain runs to 236 residues: 2,3,4,5-tetrahydropyridine-2,6-dicarboxylate N-acetyltransferase (236 aa).

It belongs to the transferase hexapeptide repeat family. DapH subfamily.

It catalyses the reaction (S)-2,3,4,5-tetrahydrodipicolinate + acetyl-CoA + H2O = L-2-acetamido-6-oxoheptanedioate + CoA. The protein operates within amino-acid biosynthesis; L-lysine biosynthesis via DAP pathway; LL-2,6-diaminopimelate from (S)-tetrahydrodipicolinate (acetylase route): step 1/3. Its function is as follows. Catalyzes the transfer of an acetyl group from acetyl-CoA to tetrahydrodipicolinate. The chain is 2,3,4,5-tetrahydropyridine-2,6-dicarboxylate N-acetyltransferase from Lactobacillus acidophilus (strain ATCC 700396 / NCK56 / N2 / NCFM).